The chain runs to 130 residues: Small ribosomal subunit protein uS9 (130 aa).

A disordered region spans residues 109–130 (RKKERKKYGQPGARAKFQYSKR).

The protein belongs to the universal ribosomal protein uS9 family.

The chain is Small ribosomal subunit protein uS9 from Maridesulfovibrio salexigens (strain ATCC 14822 / DSM 2638 / NCIMB 8403 / VKM B-1763) (Desulfovibrio salexigens).